The chain runs to 897 residues: MRPMRIFVNDDRHVMAKHSSVYPTQEELEAVQNMVSHTERALKAVSDWIDEQEKGNSELSEAENMDTPPDDESKEGAGEQKAEHMTRTLRGVMRVGLVAKGLLLKGDLDLELVLLCKEKPTTALLDKVADNLAIQLTTVTEDKYEILQSVDDAAIVIKNTKEPPLSLTIHLTSPVVREEMEKVLAGETLSVNDPPDVLDRQKCLAALASLRHAKWFQARANGLKSCVIVIRVLRDLCTRVPTWGPLRGWPLELLCEKSIGTANRPMGAGEALRRVLECLASGIVMPDGSGIYDPCEKEATDAIGHLDRQQREDITQSAQHALRLAAFGQLHKVLGMDPLPSKMPKKPKNENPVDYTVQIPPSTTYAITPMKRPMEEDGEEKSPSKKKKKIQKKEEKAEPPQAMNALMRLNQLKPGLQYKLISQTGPVHAPIFTMSVEVDGSTFEASGPSKKTAKLHVAVKVLQDMGLPTGAEGRDSSKGEDSAEESDGKPAVVAPPPVVEAVSNPSSVFPSDATTEQGPILTKHGKNPVMELNEKRRGLKYELISETGGSHDKRFVMEVEVDGQKFQGAGSNKKVAKAYAALAALEKLFPDAPLALEANKKKRAPVPVRGGPKFAAKPHNPGFGMGGPMHNEAPPPPNIRGRGRGGNIRGRGRGRGFGGTNHGGGYMNAGAGYGSYGYSSNSATAGYSQFYSNGGHYGNAGGGGSGGGGGSSSYSSYYQGDSYNSPVPPKHAGKKPLHGGQQKPSYSSGYQSHQGQQQPYNQSQYSSYGTPQGKQKGYGHGQGSYSSYSNSYNSPGGGGGSDYSYDSKFNYSGSGGRSGGNSYGSSGSSYNTGSHGGYGAGSGGSSSYQGKQGGYSSQSNYSSPGSSQSYSGPASSYQSSQGGYSRNTEHSMNYQYR.

The 374-residue stretch at 5–378 (RIFVNDDRHV…PMKRPMEEDG (374 aa)) folds into the DZF domain. Residues 52 to 85 (QEKGNSELSEAENMDTPPDDESKEGAGEQKAEHM) are disordered. A compositionally biased stretch (acidic residues) spans 60–73 (SEAENMDTPPDDES). Phosphothreonine is present on Thr-67. Basic and acidic residues predominate over residues 74–85 (KEGAGEQKAEHM). Lys-100 carries the post-translational modification N6-acetyllysine. Thr-188 carries the phosphothreonine; by PKR modification. Residue Ser-190 is modified to Phosphoserine. A Glycyl lysine isopeptide (Lys-Gly) (interchain with G-Cter in ubiquitin) cross-link involves residue Lys-297. Thr-315 is modified (phosphothreonine; by PKR). A Glycyl lysine isopeptide (Lys-Gly) (interchain with G-Cter in SUMO1) cross-link involves residue Lys-348. Residues 363-401 (TTYAITPMKRPMEEDGEEKSPSKKKKKIQKKEEKAEPPQ) form a disordered region. The Bipartite nuclear localization signal motif lies at 371–389 (KRPMEEDGEEKSPSKKKKK). Basic and acidic residues predominate over residues 372–383 (RPMEEDGEEKSP). Phosphoserine occurs at positions 382 and 384. A Glycyl lysine isopeptide (Lys-Gly) (interchain with G-Cter in SUMO2) cross-link involves residue Lys-396. One can recognise a DRBM 1 domain in the interval 398 to 467 (EPPQAMNALM…AVKVLQDMGL (70 aa)). At Lys-460 the chain carries N6-acetyllysine. Disordered stretches follow at residues 466 to 524 (GLPT…LTKH), 624 to 662 (GMGGPMHNEAPPPPNIRGRGRGGNIRGRGRGRGFGGTNH), and 720 to 897 (GDSY…YQYR). The segment covering 472–481 (EGRDSSKGED) has biased composition (basic and acidic residues). Ser-476, Ser-477, Ser-482, and Ser-486 each carry phosphoserine. Lys-489 is covalently cross-linked (Glycyl lysine isopeptide (Lys-Gly) (interchain with G-Cter in SUMO2)). Residues 499–508 (VEAVSNPSSV) are compositionally biased toward low complexity. One can recognise a DRBM 2 domain in the interval 524–590 (HGKNPVMELN…ALAALEKLFP (67 aa)). An interaction with PRMT1 region spans residues 609 to 897 (RGGPKFAAKP…TEHSMNYQYR (289 aa)). Positions 644–662 (RGGNIRGRGRGRGFGGTNH) are enriched in gly residues. 3 stretches are compositionally biased toward low complexity: residues 745–769 (SYSSGYQSHQGQQQPYNQSQYSSYG), 783–794 (GSYSSYSNSYNS), and 802–812 (DYSYDSKFNYS). Ser-794, Ser-812, Ser-814, and Ser-818 each carry phosphoserine. Over residues 813 to 822 (GSGGRSGGNS) the composition is skewed to gly residues. The segment covering 823 to 833 (YGSSGSSYNTG) has biased composition (low complexity). Residues 834–844 (SHGGYGAGSGG) show a composition bias toward gly residues. A compositionally biased stretch (low complexity) spans 845-885 (SSSYQGKQGGYSSQSNYSSPGSSQSYSGPASSYQSSQGGYS).

Identified in a IGF2BP1-dependent mRNP granule complex containing untranslated mRNAs. Interacts with FUS and SMN. Interacts (via C-terminus) with PRMT1. Forms a complex with ILF2. Can also bind to PRKDC/XRCC7: this may stabilize the interaction of PRKDC/XRCC7 and the heterodimeric complex of XRCC6/KU70 and XRCC5/KU80. Forms a heteromeric complex with ZNF346 and ILF3. Found in a nuclear export complex with XPO5, ILF3, Ran and double-stranded RNA or double-stranded minihelix VA1 RNA. Found in a nuclear export complex with XPO5, RAN, ILF3, ZNF346 and double-stranded RNA. Interacts with XPO5 and ZNF346. Forms a complex with ILF2, YLPM1, KHDRBS1, RBMX, NCOA5 and PPP1CA. Interacts with AGO1 and AGO2. Interacts with DHX36; this interaction occurs in a RNA-dependent manner. Interacts with ELAVL1; this interaction occurs in a RNA-dependent manner. Interacts with HAVCR2; this interaction promotes ILF3 ubiquitination and subsequent degradation. In terms of processing, phosphorylated at Thr-188 and Thr-315 by PKR in response to RNA viruses. This phosphorylation results in the dissociation of ILF2 from the ILF2-ILF3 complex resulting in a cytoplasmic sequestration of ILF3 where it can bind to viral RNAs and impede viral replication. Post-translationally, methylated by protein arginine N-methyltransferase 1.

It localises to the nucleus. It is found in the nucleolus. The protein localises to the cytoplasm. Functionally, RNA-binding protein that plays an essential role in the biogenesis of circular RNAs (circRNAs) which are produced by back-splicing circularization of pre-mRNAs. Within the nucleus, promotes circRNAs processing by stabilizing the regulatory elements residing in the flanking introns of the circularized exons. Plays thereby a role in the back-splicing of a subset of circRNAs. As a consequence, participates in a wide range of transcriptional and post-transcriptional processes. Binds to poly-U elements and AU-rich elements (AREs) in the 3'-UTR of target mRNAs. Upon viral infection, ILF3 accumulates in the cytoplasm and participates in the innate antiviral response. Mechanistically, ILF3 becomes phosphorylated and activated by the double-stranded RNA-activated protein kinase/PKR which releases ILF3 from cellular mature circRNAs. In turn, unbound ILF3 molecules are able to interact with and thus inhibit viral mRNAs. This Rattus norvegicus (Rat) protein is Interleukin enhancer-binding factor 3 (Ilf3).